Reading from the N-terminus, the 94-residue chain is ESAT-6-like protein EsxN (94 aa).

It belongs to the WXG100 family. ESAT-6 subfamily.

The protein resides in the secreted. The protein is ESAT-6-like protein EsxN of Mycobacterium bovis (strain ATCC BAA-935 / AF2122/97).